Consider the following 261-residue polypeptide: Small ribosomal subunit protein eS4 (261 aa).

The S4 RNA-binding domain occupies 42–104 (LPLVIFLRNR…TGEFFRLIYD (63 aa)).

Belongs to the eukaryotic ribosomal protein eS4 family.

This is Small ribosomal subunit protein eS4 (RpS4) from Carabus granulatus (Ground beetle).